Consider the following 432-residue polypeptide: Putative D-alanyl-D-alanine carboxypeptidase (432 aa).

A helical; Signal-anchor membrane pass occupies residues 7–25 (ATVLLTFSLSAFAVEYPVL).

This sequence belongs to the peptidase S12 family. YfeW subfamily.

It is found in the cell inner membrane. The enzyme catalyses Preferential cleavage: (Ac)2-L-Lys-D-Ala-|-D-Ala. Also transpeptidation of peptidyl-alanyl moieties that are N-acyl substituents of D-alanine.. This is Putative D-alanyl-D-alanine carboxypeptidase from Salmonella gallinarum (strain 287/91 / NCTC 13346).